The following is a 224-amino-acid chain: Glutamate/aspartate import permease protein GltK (224 aa).

The Periplasmic portion of the chain corresponds to 1–19 (MYEFDWSSIVPSLPYLLDG). Residues 20–40 (LVITLKITVTAVVIGILWGTM) traverse the membrane as a helical segment. Residues 20–216 (LVITLKITVT…VISLSASLLV (197 aa)) enclose the ABC transmembrane type-1 domain. Topologically, residues 41–67 (LAVMRLSSFAPVAWFAKAYVNVFRSIP) are cytoplasmic. A helical membrane pass occupies residues 68–88 (LVMVLLWFYLIVPGFLQNVLG). The Periplasmic segment spans residues 89–94 (LSPKND). The chain crosses the membrane as a helical span at residues 95-112 (IRLISAMVAFSMFEAAYY). The Cytoplasmic segment spans residues 113 to 154 (SEIIRAGIQSISRGQSSAALALGMTHWQSMKLIILPQAFRAM). Residues 155–175 (VPLLLTQGIVLFQDTSLVYVL) form a helical membrane-spanning segment. At 176 to 196 (SLADFFRTASTIGERDGTQVE) the chain is on the periplasmic side. A helical membrane pass occupies residues 197-217 (MILFAGFVYFVISLSASLLVS). Over 218 to 224 (YLKRRTA) the chain is Cytoplasmic.

This sequence belongs to the binding-protein-dependent transport system permease family. HisMQ subfamily. The complex is composed of two ATP-binding proteins (GltL), two transmembrane proteins (GltJ and GltK) and a solute-binding protein (GltI).

The protein localises to the cell inner membrane. Functionally, part of the ABC transporter complex GltIJKL involved in glutamate and aspartate uptake. Probably responsible for the translocation of the substrate across the membrane. This is Glutamate/aspartate import permease protein GltK (gltK) from Escherichia coli O157:H7.